We begin with the raw amino-acid sequence, 196 residues long: Carnitine operon protein CaiE (196 aa).

Residues 173–196 form a disordered region; sequence TQPLRQMEENRPRLQGTTDVTPKR. Residues 187-196 are compositionally biased toward polar residues; that stretch reads QGTTDVTPKR.

It belongs to the transferase hexapeptide repeat family.

Its pathway is amine and polyamine metabolism; carnitine metabolism. Its function is as follows. Overproduction of CaiE stimulates the activity of CaiB and CaiD. The protein is Carnitine operon protein CaiE of Shigella flexneri serotype 5b (strain 8401).